A 206-amino-acid polypeptide reads, in one-letter code: 2-oxoglutarate-dependent dioxygenase iboH (206 aa).

Positions 51–157 (PSTTTLVLLH…RYSIAYFLRP (107 aa)) constitute a Fe2OG dioxygenase domain. Fe cation-binding residues include His75, Asp77, and His134. A 2-oxoglutarate-binding site is contributed by Arg148.

The protein belongs to the iron/ascorbate-dependent oxidoreductase family. Fe(2+) serves as cofactor.

The catalysed reaction is L-glutamate + 2-oxoglutarate + O2 = (3R)-3-hydroxy-L-glutamate + succinate + CO2. The protein operates within secondary metabolite biosynthesis. Functionally, 2-oxoglutarate-dependent dioxygenase; part of the gene cluster that mediates the biosynthesis of the psychoactive metabolites ibotenic acid and muscimol. The first committed step is glutamate hydroxylation by the 2-oxoglutarate-dependent dioxygenase iboH, and the last step is decarboxylation of ibotenic acid to muscimol by the decarboxylase iboD. The order of the intermediate reactions is somewhat ambiguous. IboA likely activates the carboxylic acid at position 5 to introduce an amide bond, and the flavin monooxygenase iboF generates the N-O bond. There are several options for the latter step. One option is that iboF directly hydroxylates the amide nitrogen formed by iboA to produce a hydroxamic acid species. Another option is that iboF hydroxylates an external N-containing compound, whose resulting N-O bond is subsequently introduced into the hydroxyglutamate scaffold. The paralogous PLP-dependent cystathionine gamma-synthase-like enzymes iboG1 and iboG2 are likely involved in substitution of the OH group at position 3 by the O-N moiety. The first cyclic intermediate is most probably tricholomic acid which is likely desaturated to ibotenic acid by the cytochrome P450 monooxygenase iboC. In Amanita muscaria (strain Koide BX008), this protein is 2-oxoglutarate-dependent dioxygenase iboH.